The sequence spans 401 residues: Glucose-6-phosphate isomerase (401 aa).

The Proton donor role is filled by Glu-261. Residues His-282 and Lys-392 contribute to the active site.

This sequence belongs to the GPI family. In terms of assembly, homodimer.

It localises to the cytoplasm. The catalysed reaction is alpha-D-glucose 6-phosphate = beta-D-fructose 6-phosphate. The protein operates within carbohydrate biosynthesis; gluconeogenesis. It participates in carbohydrate degradation; glycolysis; D-glyceraldehyde 3-phosphate and glycerone phosphate from D-glucose: step 2/4. With respect to regulation, competively inhibited by 6-phosphogluconate and erythrose 4-phosphate. Functionally, catalyzes the isomerization of glucose-6-P to fructose-6-P. This chain is Glucose-6-phosphate isomerase, found in Methanocaldococcus jannaschii (strain ATCC 43067 / DSM 2661 / JAL-1 / JCM 10045 / NBRC 100440) (Methanococcus jannaschii).